The following is a 29-amino-acid chain: Cyclotide mden-F (29 aa).

Positions 1 to 29 (GLPICGETCFFGKCNTPKCTCINPICYKN) form a cross-link, cyclopeptide (Gly-Asn). 3 disulfides stabilise this stretch: C5/C19, C9/C21, and C14/C26.

Belongs to the cyclotide family. Post-translationally, this is a cyclic peptide.

Its function is as follows. Probably participates in a plant defense mechanism. This is Cyclotide mden-F from Melicytus dentatus (Tree violet).